A 585-amino-acid chain; its full sequence is Involucrin (585 aa).

Over residues 1–15 (MSQQHTLPVTLSPAL) the composition is skewed to polar residues. Positions 1 to 132 (MSQQHTLPVT…LEEEKKLLDQ (132 aa)) are disordered. Gln-79 is lipidated: Omega-hydroxyceramide glutamate ester. Positions 92-115 (WEQHEEYQKAENPEQQLKQEKTQR) are enriched in basic and acidic residues. Omega-hydroxyceramide glutamate ester attachment occurs at residues Gln-118 and Gln-133. The interval 149-540 (KEQLLELPEQ…KDLEQQKGQL (392 aa)) is disordered. 23 repeat units span residues 153–162 (LELPEQQEGH), 163–172 (LKHLEQQEGQ), 173–182 (LKHPEQQEGQ), 183–192 (LELPEQQEGQ), 193–202 (LELPEQQEGQ), 203–212 (LELPEQQEGQ), 213–222 (LELPEQQEGQ), 223–232 (LELPEQQEGQ), 233–242 (LELPQQQEGQ), 243–252 (LELSEQQEGQ), 253–262 (LELSEQQEGQ), 263–272 (LKHLEHQEGQ), 273–282 (LEVPEEQMGQ), 283–292 (LKYLEQQEGQ), 293–302 (LKHLDQQEKQ), 303–312 (PELPEQQMGQ), 313–322 (LKHLEQQEGQ), 323–332 (PKHLEQQEGQ), 333–342 (LEQLEEQEGQ), 343–352 (LKHLEQQEGQ), 353–362 (LEHLEHQEGQ), 363–372 (LGLPEQQVLQ), and 373–382 (LKQLEKQQGQ). Residues 153–542 (LELPEQQEGH…LEQQKGQLEQ (390 aa)) are 39 X 10 AA approximate tandem repeats of [LP]-[EKG]-[LHVYQEK]-[PLSQE]-[EQDV]-[QHEKRGA]-Q-[EMVQLP]-[GKLE]-[QHVNLD]. Basic and acidic residues predominate over residues 159 to 178 (QEGHLKHLEQQEGQLKHPEQ). Residues 179-261 (QEGQLELPEQ…QLELSEQQEG (83 aa)) show a composition bias toward low complexity. A compositionally biased stretch (basic and acidic residues) spans 262–271 (QLKHLEHQEG). Basic and acidic residues-rich tracts occupy residues 292-304 (QLKHLDQQEKQPE), 314-328 (KHLEQQEGQPKHLEQ), and 341-360 (GQLKHLEQQEGQLEHLEHQE). The span at 361 to 383 (GQLGLPEQQVLQLKQLEKQQGQP) shows a compositional bias: low complexity. Residues 383 to 392 (PKHLEEEEGQ) form a 24; approximate repeat. Over residues 384-393 (KHLEEEEGQL) the composition is skewed to basic and acidic residues. 11 repeat units span residues 393-402 (LKHLVQQEGQ), 403-412 (LKHLVQQEGQ), 413-422 (LEQQERQVEH), 423-432 (LEQQVGQLKH), 433-442 (LEEQEGQLKH), 443-452 (LEQQQGQLEV), 453-462 (PEQQVGQPKN), 463-472 (LEQEEKQLEL), 473-482 (PEQQEGQVKH), 483-492 (LEKQEAQLEL), and 493-502 (PEQQVGQPKH). Composition is skewed to basic and acidic residues over residues 415–424 (QQERQVEHLE) and 431–444 (KHLEEQEGQLKHLE). A compositionally biased stretch (low complexity) spans 445–462 (QQQGQLEVPEQQVGQPKN). Over residues 479 to 488 (QVKHLEKQEA) the composition is skewed to basic and acidic residues. Gln-496 is covalently cross-linked (Isoglutamyl lysine isopeptide (Gln-Lys) (interchain with K-? in other proteins)). Positions 501 to 535 (KHLEQQEKHLEHPEQQDGQLKHLEQQEGQLKDLEQ) are enriched in basic and acidic residues. A 36; approximate repeat occupies 503–512 (LEQQEKHLEH). 2 consecutive repeat copies span residues 513–522 (PEQQDGQLKH) and 523–532 (LEQQEGQLKD). The stretch at 533 to 542 (LEQQKGQLEQ) is one 39; approximate repeat.

It belongs to the involucrin family. As to quaternary structure, directly or indirectly cross-linked to cornifelin (CNFN). Post-translationally, substrate of transglutaminase. Some glutamines and lysines are cross-linked to other involucrin molecules, to other proteins such as keratin, desmoplakin, periplakin and envoplakin, and to lipids like omega-hydroxyceramide. Keratinocytes of epidermis and other stratified squamous epithelia.

It localises to the cytoplasm. Part of the insoluble cornified cell envelope (CE) of stratified squamous epithelia. The protein is Involucrin (IVL) of Homo sapiens (Human).